Here is an 82-residue protein sequence, read N- to C-terminus: Putative antitoxin Saci_0468 (82 aa).

It belongs to the UPF0330 family.

Its function is as follows. Possibly the antitoxin component of a type II toxin-antitoxin (TA) system. The polypeptide is Putative antitoxin Saci_0468 (Sulfolobus acidocaldarius (strain ATCC 33909 / DSM 639 / JCM 8929 / NBRC 15157 / NCIMB 11770)).